The sequence spans 74 residues: RNA-binding protein Hfq (74 aa).

The Sm domain maps to 9–69 (DQYLNQLRKN…ISTFSPVKNV (61 aa)).

The protein belongs to the Hfq family. Homohexamer.

Its function is as follows. RNA chaperone that binds small regulatory RNA (sRNAs) and mRNAs to facilitate mRNA translational regulation in response to envelope stress, environmental stress and changes in metabolite concentrations. Also binds with high specificity to tRNAs. The protein is RNA-binding protein Hfq of Oceanobacillus iheyensis (strain DSM 14371 / CIP 107618 / JCM 11309 / KCTC 3954 / HTE831).